The chain runs to 419 residues: ATP-dependent RNA helicase RhlB (419 aa).

A Q motif motif is present at residues 9 to 37; sequence QRFSDLALHRSVQQAIKEKGFEFCTPIQA. Positions 40–217 constitute a Helicase ATP-binding domain; it reads LPITLKGQDI…FEHMNDPQYV (178 aa). 53 to 60 contributes to the ATP binding site; the sequence is AQTGTGKT. Positions 163–166 match the DEAD box motif; it reads DEAD. One can recognise a Helicase C-terminal domain in the interval 241–388; the sequence is KMALLMTLLE…VSQYDAKALI (148 aa).

It belongs to the DEAD box helicase family. RhlB subfamily. In terms of assembly, component of the RNA degradosome, which is a multiprotein complex involved in RNA processing and mRNA degradation.

It localises to the cytoplasm. It carries out the reaction ATP + H2O = ADP + phosphate + H(+). Functionally, DEAD-box RNA helicase involved in RNA degradation. Has RNA-dependent ATPase activity and unwinds double-stranded RNA. In Histophilus somni (strain 129Pt) (Haemophilus somnus), this protein is ATP-dependent RNA helicase RhlB.